Consider the following 273-residue polypeptide: Diphthine methyl ester synthase (273 aa).

S-adenosyl-L-methionine-binding positions include Leu-10, Asp-87, Gly-90, 115–116 (SI), Leu-166, Val-224, and His-249.

The protein belongs to the diphthine synthase family.

The enzyme catalyses 2-[(3S)-amino-3-carboxypropyl]-L-histidyl-[translation elongation factor 2] + 4 S-adenosyl-L-methionine = diphthine methyl ester-[translation elongation factor 2] + 4 S-adenosyl-L-homocysteine + 3 H(+). The protein operates within protein modification; peptidyl-diphthamide biosynthesis. Functionally, S-adenosyl-L-methionine-dependent methyltransferase that catalyzes four methylations of the modified target histidine residue in translation elongation factor 2 (EF-2), to form an intermediate called diphthine methyl ester. The four successive methylation reactions represent the second step of diphthamide biosynthesis. This is Diphthine methyl ester synthase (dph5) from Dictyostelium discoideum (Social amoeba).